We begin with the raw amino-acid sequence, 89 residues long: UPF0147 protein STK_04605 (89 aa).

This sequence belongs to the UPF0147 family.

The chain is UPF0147 protein STK_04605 from Sulfurisphaera tokodaii (strain DSM 16993 / JCM 10545 / NBRC 100140 / 7) (Sulfolobus tokodaii).